Reading from the N-terminus, the 883-residue chain is Lysine-specific demethylase JMJ29 (883 aa).

Disordered stretches follow at residues 30 to 62 (KPFMSKGSSPSSSSDSRKRKLSRAEDSDDSAVK) and 161 to 204 (RTHS…SRKQ). Low complexity predominate over residues 34–43 (SKGSSPSSSS). 2 stretches are compositionally biased toward polar residues: residues 161–172 (RTHSLSANSPEN) and 184–204 (SPASNVSDSIQKNDCTSSRKQ). 12 residues coordinate Zn(2+): Cys-209, Cys-212, Cys-223, Cys-226, Cys-232, Cys-235, Cys-252, Cys-255, Cys-338, Cys-341, Cys-363, and His-381. Residues 209–256 (CHQCLKGERITLLICSECEKTMFCLQCIRKWYPNLSEDDVVEKCPLCR) form an RING-type; degenerate zinc finger. The B box-type; atypical zinc-finger motif lies at 333-392 (DERVYCDHCATSIVDLHRSCPKCSYELCLKCCQEIREGSLSERPEMKFHYVDRGHRYMHG). The region spanning 632-863 (PRTGILNIAT…ECLRLTEEFR (232 aa)) is the JmjC domain. Fe cation-binding residues include His-676 and Asp-678. Positions 713-743 (NKVDKQSTEDCNEKEEEEEEELNMPEISSNE) are disordered. The segment covering 722 to 735 (DCNEKEEEEEEELN) has biased composition (acidic residues). The short motif at 755-762 (FRREDVPK) is the Nuclear localization signal element. His-831 is a binding site for Fe cation.

It belongs to the JARID1 histone demethylase family. The cofactor is Fe(2+). As to expression, expressed in inflorescences, roots, siliques, leaves and stems.

It is found in the nucleus. May function as histone H3 lysine demethylase and be involved in regulation of gene expression. The sequence is that of Lysine-specific demethylase JMJ29 from Arabidopsis thaliana (Mouse-ear cress).